The primary structure comprises 303 residues: Glutathione transport system permease protein GsiD (303 aa).

6 helical membrane-spanning segments follow: residues 40-60, 105-125, 144-164, 165-185, 222-242, and 266-286; these read AMTAALFVILLIVVAIFARWI, LAAGVFAVFIGAAIGTLLGLL, LFAFPGILLAIAVVAVLGSGI, ANVIIAVAIFSIPAFARLVRG, IVVFFTMRIGTSIISAASLSF, and VIAPHVAVFPVLAIFLTVLAF. Residues 101–290 enclose the ABC transmembrane type-1 domain; sequence AQISLAAGVF…LTVLAFNLLG (190 aa).

This sequence belongs to the binding-protein-dependent transport system permease family. As to quaternary structure, the complex is composed of two ATP-binding proteins (GsiA), two transmembrane proteins (GsiC and GsiD) and a solute-binding protein (GsiB).

Its subcellular location is the cell inner membrane. Part of the ABC transporter complex GsiABCD involved in glutathione import. Probably responsible for the translocation of the substrate across the membrane. This chain is Glutathione transport system permease protein GsiD, found in Shigella dysenteriae serotype 1 (strain Sd197).